Reading from the N-terminus, the 246-residue chain is Ribonuclease PH (246 aa).

Phosphate is bound by residues Arg91 and Gly129–Arg131.

This sequence belongs to the RNase PH family. In terms of assembly, homohexameric ring arranged as a trimer of dimers.

It catalyses the reaction tRNA(n+1) + phosphate = tRNA(n) + a ribonucleoside 5'-diphosphate. Functionally, phosphorolytic 3'-5' exoribonuclease that plays an important role in tRNA 3'-end maturation. Removes nucleotide residues following the 3'-CCA terminus of tRNAs; can also add nucleotides to the ends of RNA molecules by using nucleoside diphosphates as substrates, but this may not be physiologically important. Probably plays a role in initiation of 16S rRNA degradation (leading to ribosome degradation) during starvation. This Paraburkholderia xenovorans (strain LB400) protein is Ribonuclease PH.